A 79-amino-acid chain; its full sequence is Pulmonary surfactant-associated protein B (79 aa).

In terms of domain architecture, Saposin B-type spans proline 4 to serine 79. Disulfide bonds link cysteine 8–cysteine 77, cysteine 11–cysteine 71, and cysteine 35–cysteine 46.

In terms of assembly, homodimer; disulfide-linked.

It is found in the secreted. The protein localises to the extracellular space. It localises to the surface film. Functionally, pulmonary surfactant-associated proteins promote alveolar stability by lowering the surface tension at the air-liquid interface in the peripheral air spaces. SP-B increases the collapse pressure of palmitic acid to nearly 70 millinewtons per meter. In Sus scrofa (Pig), this protein is Pulmonary surfactant-associated protein B (SFTPB).